A 503-amino-acid polypeptide reads, in one-letter code: MEESQGYLELDKSRQHDFLYPLIFQEYIYVLAHDHGLNRSILLENLGSDNKFSSLIVKRLITRMYQQNRLIISANDSNQNPFLGHNKDLYSQMISEGFAVIVEIPFPLRLVSSLERKEIVKSHNLRSIHSVFPFLEDKFLHLNYVSDILIPHPIHLEILVQTLRYWVKDASSLHLLRFFLYEYRNWNSLINPKKSIFVFSKRNQRLFLFLYNSHVYEYESVFVFLRNQSSHLRSTSSGALLERIYFYGKIKHLVEAFANDFQASPWLFKDPFVHYVRYQGKSILASKGTPLLMNKWKYYLVNFWQCHFYVWSQPVRIYINQLSNHSFYFLGYLSSVGLNPSVVRNQMLENSFIIDNAIKKFDIIVPIIPLIGSLAKAKFCNVLGHPISKPARADSSDSDIIDRFVRICRNLSHYHSGSSKKKSLYRIKYILRLSCARTLARKHKSPVRAFLKRLGSELLEEFLTEEEQVLSLIVPASSTSRRLYRGRIWYLDIICINDLANHE.

This sequence belongs to the intron maturase 2 family. MatK subfamily.

The protein localises to the plastid. It localises to the chloroplast. In terms of biological role, usually encoded in the trnK tRNA gene intron. Probably assists in splicing its own and other chloroplast group II introns. In Liquidambar formosana (Formosan gum), this protein is Maturase K.